The primary structure comprises 123 residues: UPF0738 protein BcerKBAB4_1107 (123 aa).

The protein belongs to the UPF0738 family.

The polypeptide is UPF0738 protein BcerKBAB4_1107 (Bacillus mycoides (strain KBAB4) (Bacillus weihenstephanensis)).